The primary structure comprises 117 residues: Cell division protein FtsL (117 aa).

The Cytoplasmic portion of the chain corresponds to 1 to 35; that stretch reads MSNLAYQPEKQQRHAISPEKKVIVKKRASITLGEK. Residues 36 to 56 form a helical membrane-spanning segment; the sequence is VLLVLFAAAVLSVSLLIVSKA. Residues 57–117 are Extracellular-facing; that stretch reads YAAYQTNIEV…KDKKVKNIQE (61 aa).

It belongs to the FtsL family. As to quaternary structure, monomer. Interacts with DivIB and DivIC. Interaction with DivIC stabilizes FtsL against RasP cleavage. Cleaved by RasP. Cleavage is important for turnover and function of FtsL.

The protein localises to the cell membrane. Its function is as follows. Essential cell division protein that may play a structural role. Probably involved in the regulation of the timing of cell division. Also required for sporulation. This Bacillus subtilis (strain 168) protein is Cell division protein FtsL.